The sequence spans 299 residues: ATP phosphoribosyltransferase (299 aa).

The protein belongs to the ATP phosphoribosyltransferase family. Long subfamily. Requires Mg(2+) as cofactor.

Its subcellular location is the cytoplasm. It catalyses the reaction 1-(5-phospho-beta-D-ribosyl)-ATP + diphosphate = 5-phospho-alpha-D-ribose 1-diphosphate + ATP. It participates in amino-acid biosynthesis; L-histidine biosynthesis; L-histidine from 5-phospho-alpha-D-ribose 1-diphosphate: step 1/9. Its activity is regulated as follows. Feedback inhibited by histidine. Functionally, catalyzes the condensation of ATP and 5-phosphoribose 1-diphosphate to form N'-(5'-phosphoribosyl)-ATP (PR-ATP). Has a crucial role in the pathway because the rate of histidine biosynthesis seems to be controlled primarily by regulation of HisG enzymatic activity. The sequence is that of ATP phosphoribosyltransferase from Baumannia cicadellinicola subsp. Homalodisca coagulata.